The chain runs to 151 residues: Ribonuclease H (151 aa).

Residues 1 to 141 (MKHVDIFTDG…ADELARKGME (141 aa)) form the RNase H type-1 domain. Residues Asp9, Glu47, Asp69, and Asp133 each coordinate Mg(2+).

It belongs to the RNase H family. As to quaternary structure, monomer. Requires Mg(2+) as cofactor.

The protein resides in the cytoplasm. It carries out the reaction Endonucleolytic cleavage to 5'-phosphomonoester.. Functionally, endonuclease that specifically degrades the RNA of RNA-DNA hybrids. This chain is Ribonuclease H, found in Rhizobium johnstonii (strain DSM 114642 / LMG 32736 / 3841) (Rhizobium leguminosarum bv. viciae).